Reading from the N-terminus, the 907-residue chain is Catenin alpha-1 (907 aa).

Over residues valine 870 to glutamine 879 the composition is skewed to basic and acidic residues. Positions valine 870 to valine 895 are disordered. Over residues lysine 882–isoleucine 892 the composition is skewed to basic residues.

The protein belongs to the vinculin/alpha-catenin family. As to quaternary structure, interacts with ctnnb1, jupa and cdh2. Interacts with cdh1 during early stages of oogenesis, interaction is no longer present when oocyte develops into the unfertilized egg. Expressed in the skin (at protein level). Expressed in the ovary.

Its subcellular location is the cell junction. The protein resides in the adherens junction. The protein localises to the cytoplasm. It localises to the cytoskeleton. It is found in the cell membrane. Its subcellular location is the nucleus. Its function is as follows. Associates with the cytoplasmic domain of a variety of cadherins, forming catenin and cadherin complexes which are further linked to the actin filament network and is thereby involved in cell-cell adhesion. Required for embryonic development, via maintenance of adherens junctions that facilitate the maintenance of the epithelial barrier. This Danio rerio (Zebrafish) protein is Catenin alpha-1.